The primary structure comprises 365 residues: tRNA N6-adenosine threonylcarbamoyltransferase (365 aa).

Positions 122 and 126 each coordinate Fe cation. Residues 147–151 (LVSGG), D180, G193, and N293 contribute to the substrate site. D321 provides a ligand contact to Fe cation. Residues 340 to 365 (PNEIDTAARPRWPLSERTPATPEHVS) are disordered.

Belongs to the KAE1 / TsaD family. It depends on Fe(2+) as a cofactor.

The protein localises to the cytoplasm. It catalyses the reaction L-threonylcarbamoyladenylate + adenosine(37) in tRNA = N(6)-L-threonylcarbamoyladenosine(37) in tRNA + AMP + H(+). In terms of biological role, required for the formation of a threonylcarbamoyl group on adenosine at position 37 (t(6)A37) in tRNAs that read codons beginning with adenine. Is involved in the transfer of the threonylcarbamoyl moiety of threonylcarbamoyl-AMP (TC-AMP) to the N6 group of A37, together with TsaE and TsaB. TsaD likely plays a direct catalytic role in this reaction. The polypeptide is tRNA N6-adenosine threonylcarbamoyltransferase (Gluconobacter oxydans (strain 621H) (Gluconobacter suboxydans)).